The following is a 378-amino-acid chain: Homoserine O-acetyltransferase (378 aa).

In terms of domain architecture, AB hydrolase-1 spans 52-337 (NAILICHALT…YSQHGHDTFL (286 aa)). Ser-148 (nucleophile) is an active-site residue. Arg-217 is a substrate binding site. Catalysis depends on residues Asp-304 and His-333. Residue Asp-334 coordinates substrate.

This sequence belongs to the AB hydrolase superfamily. MetX family. Homodimer.

It localises to the cytoplasm. It carries out the reaction L-homoserine + acetyl-CoA = O-acetyl-L-homoserine + CoA. Its pathway is amino-acid biosynthesis; L-methionine biosynthesis via de novo pathway; O-acetyl-L-homoserine from L-homoserine: step 1/1. Its function is as follows. Transfers an acetyl group from acetyl-CoA to L-homoserine, forming acetyl-L-homoserine. In Chloroherpeton thalassium (strain ATCC 35110 / GB-78), this protein is Homoserine O-acetyltransferase.